We begin with the raw amino-acid sequence, 477 residues long: Probable cytosolic Fe-S cluster assembly factor CG17683 (477 aa).

[4Fe-4S] cluster-binding residues include Cys23, Cys68, Cys71, Cys74, Cys187, Cys243, Cys395, and Cys399.

It belongs to the NARF family.

In terms of biological role, component of the cytosolic iron-sulfur (Fe/S) protein assembly machinery. Required for maturation of extramitochondrial Fe/S proteins. The chain is Probable cytosolic Fe-S cluster assembly factor CG17683 from Drosophila melanogaster (Fruit fly).